Here is a 354-residue protein sequence, read N- to C-terminus: Maturase K (354 aa).

This sequence belongs to the intron maturase 2 family. MatK subfamily.

It localises to the plastid. The protein resides in the chloroplast. Functionally, usually encoded in the trnK tRNA gene intron. Probably assists in splicing its own and other chloroplast group II introns. In Hydrangea quercifolia (Oakleaf hydrangea), this protein is Maturase K (matK).